Here is a 252-residue protein sequence, read N- to C-terminus: MVNKEEAQRLKELGNKCFQEGKYEEAVKYFSDAITNDPLDHVLYSNLSGAFASLGRFYEALESANKCISIKKDWPKGYIRKGCAEHGLRQLSNAEKTYLEGLKIDPNNKSLQDALSKVRNENMLENAQLIAHLNNIIENDPQLKSYKEENSNYPHELLNTIKSINSNPMNIRIILSTCHPKISEGVEKFFGFKFTGEGNDAEERQRQQREEEERRKKKEEEERKKKEEEEMKKQNRTPEQIQGDEHKLKVMN.

3 TPR repeats span residues 7 to 40 (AQRLKELGNKCFQEGKYEEAVKYFSDAITNDPLD), 41 to 74 (HVLYSNLSGAFASLGRFYEALESANKCISIKKDW), and 75 to 108 (PKGYIRKGCAEHGLRQLSNAEKTYLEGLKIDPNN). A coiled-coil region spans residues 197–239 (EGNDAEERQRQQREEEERRKKKEEEERKKKEEEEMKKQNRTPE). Residues 199-252 (NDAEERQRQQREEEERRKKKEEEERKKKEEEEMKKQNRTPEQIQGDEHKLKVMN) form a disordered region. Composition is skewed to basic and acidic residues over residues 201–233 (AEERQRQQREEEERRKKKEEEERKKKEEEEMKK) and 243–252 (GDEHKLKVMN).

In terms of assembly, monomer. Homodimer. Forms a complex composed of HOP and chaperones HSP70 and HSP90; the interaction is stronger in the absence of ATP. Interacts (via TPR 1, 2, 3, 7, 8 and 9 repeats) with HSP70 (via C-terminus); the interaction is direct and is stronger in the absence of ATP. Interacts (via TPR 4, 5 and 6 repeats) with HSP90 (via C-terminus); the interaction is direct.

The protein localises to the cytoplasm. Functionally, acts as a co-chaperone and mediates the association of the chaperones HSP70 and HSP90 probably facilitating substrate transfer from HSP70 to HSP90. Stimulates HSP70 ATPase activity and, in contrast, inhibits HSP90 ATPase activity. The chain is Hsp70-Hsp90 organising protein from Plasmodium falciparum.